A 728-amino-acid chain; its full sequence is E3 ubiquitin-protein ligase TRIM36 (728 aa).

The segment at 33-84 (CPACKELFTHPLILPCQHSICHKCVKELLLTLDDSFNDVGSDNSNQSSPRLR) adopts an RING-type; degenerate zinc-finger fold. B box-type zinc fingers lie at residues 154-192 (AIMCDLCKPPPQESTKSCMDCSASYCNECFKIHHPWGTI) and 207-249 (PKIL…VTTM). The Zn(2+) site is built by cysteine 212, histidine 215, cysteine 235, and histidine 241. The stretch at 271–345 (ESQVKSQISE…MEEYQGLLEN (75 aa)) forms a coiled coil. Residues 356-413 (LKETDQSCFVQTAKQLHLRIQKATESLKSFRPAAQTSFEDYVVNTSKQTELLGELSFF) form the COS domain. Residues 419-510 (VPEINEEQSK…RELILHTPPA (92 aa)) form the Fibronectin type-III domain. One can recognise a B30.2/SPRY domain in the interval 508 to 720 (PPAPVFSFLF…IQLEEPITAK (213 aa)).

This sequence belongs to the TRIM/RBCC family. In terms of assembly, interacts with CENPH. Highly expressed in testis, prostate and brain. Weakly expressed in kidney, lung and heart. Expressed in fetal tissues.

The protein resides in the cytoplasm. It is found in the cytoplasmic vesicle. The protein localises to the secretory vesicle. Its subcellular location is the acrosome. It localises to the cytoskeleton. It catalyses the reaction S-ubiquitinyl-[E2 ubiquitin-conjugating enzyme]-L-cysteine + [acceptor protein]-L-lysine = [E2 ubiquitin-conjugating enzyme]-L-cysteine + N(6)-ubiquitinyl-[acceptor protein]-L-lysine.. Its function is as follows. E3 ubiquitin-protein ligase which mediates ubiquitination and subsequent proteasomal degradation of target proteins. Involved in chromosome segregation and cell cycle regulation. May play a role in the acrosome reaction and fertilization. In Homo sapiens (Human), this protein is E3 ubiquitin-protein ligase TRIM36 (TRIM36).